A 127-amino-acid polypeptide reads, in one-letter code: Aspartate 1-decarboxylase (127 aa).

Serine 25 serves as the catalytic Schiff-base intermediate with substrate; via pyruvic acid. Pyruvic acid (Ser) is present on serine 25. Threonine 57 is a binding site for substrate. The active-site Proton donor is the tyrosine 58. 73 to 75 (GAA) contributes to the substrate binding site.

This sequence belongs to the PanD family. In terms of assembly, heterooctamer of four alpha and four beta subunits. It depends on pyruvate as a cofactor. In terms of processing, is synthesized initially as an inactive proenzyme, which is activated by self-cleavage at a specific serine bond to produce a beta-subunit with a hydroxyl group at its C-terminus and an alpha-subunit with a pyruvoyl group at its N-terminus.

The protein localises to the cytoplasm. It carries out the reaction L-aspartate + H(+) = beta-alanine + CO2. It functions in the pathway cofactor biosynthesis; (R)-pantothenate biosynthesis; beta-alanine from L-aspartate: step 1/1. Its function is as follows. Catalyzes the pyruvoyl-dependent decarboxylation of aspartate to produce beta-alanine. The chain is Aspartate 1-decarboxylase from Bacillus cereus (strain 03BB102).